Reading from the N-terminus, the 838-residue chain is Urease (838 aa).

The region spanning 402 to 838 (GGFDTHIHFI…LPLTQDYFVY (437 aa)) is the Urease domain. His407, His409, and Lys490 together coordinate Ni(2+). At Lys490 the chain carries N6-carboxylysine. Residue His492 coordinates substrate. Positions 519 and 545 each coordinate Ni(2+). His593 acts as the Proton donor in catalysis. Residue Asp633 coordinates Ni(2+).

This sequence in the C-terminal section; belongs to the metallo-dependent hydrolases superfamily. Urease alpha subunit family. In terms of assembly, homohexamer. The cofactor is Ni cation. Post-translationally, carboxylation allows a single lysine to coordinate two nickel ions.

It catalyses the reaction urea + 2 H2O + H(+) = hydrogencarbonate + 2 NH4(+). It participates in nitrogen metabolism; urea degradation; CO(2) and NH(3) from urea (urease route): step 1/1. The protein is Urease (ure1) of Aspergillus fumigatus (strain ATCC MYA-4609 / CBS 101355 / FGSC A1100 / Af293) (Neosartorya fumigata).